The chain runs to 181 residues: Probable nicotinate-nucleotide adenylyltransferase (181 aa).

Belongs to the NadD family.

The enzyme catalyses nicotinate beta-D-ribonucleotide + ATP + H(+) = deamido-NAD(+) + diphosphate. It participates in cofactor biosynthesis; NAD(+) biosynthesis; deamido-NAD(+) from nicotinate D-ribonucleotide: step 1/1. Functionally, catalyzes the reversible adenylation of nicotinate mononucleotide (NaMN) to nicotinic acid adenine dinucleotide (NaAD). This Campylobacter fetus subsp. fetus (strain 82-40) protein is Probable nicotinate-nucleotide adenylyltransferase.